The sequence spans 86 residues: Probable acyl carrier protein CCNA_01221 (86 aa).

Positions 6-83 constitute a Carrier domain; sequence TVTDLSLREI…DLSKLINDLR (78 aa). Serine 43 bears the O-(pantetheine 4'-phosphoryl)serine mark.

Belongs to the acyl carrier protein (ACP) family.

Its pathway is lipid metabolism; sphingolipid metabolism. In terms of biological role, involved in de novo bacterial ceramide synthesis. This Caulobacter vibrioides (strain NA1000 / CB15N) (Caulobacter crescentus) protein is Probable acyl carrier protein CCNA_01221.